The following is a 376-amino-acid chain: 5-amino-6-(D-ribitylamino)uracil--L-tyrosine 4-hydroxyphenyl transferase 1 (376 aa).

Positions 50 to 284 (VTYVVNRNIN…AISRILLHGH (235 aa)) constitute a Radical SAM core domain. Residues C64, C68, and C71 each coordinate [4Fe-4S] cluster.

This sequence belongs to the radical SAM superfamily. CofH family. In terms of assembly, consists of two subunits, CofG and CofH. [4Fe-4S] cluster serves as cofactor.

It catalyses the reaction 5-amino-6-(D-ribitylamino)uracil + L-tyrosine + S-adenosyl-L-methionine = 5-amino-5-(4-hydroxybenzyl)-6-(D-ribitylimino)-5,6-dihydrouracil + 2-iminoacetate + 5'-deoxyadenosine + L-methionine + H(+). The protein operates within cofactor biosynthesis; coenzyme F0 biosynthesis. Its function is as follows. Catalyzes the radical-mediated synthesis of 5-amino-5-(4-hydroxybenzyl)-6-(D-ribitylimino)-5,6-dihydrouracil from 5-amino-6-(D-ribitylamino)uracil and L-tyrosine. This chain is 5-amino-6-(D-ribitylamino)uracil--L-tyrosine 4-hydroxyphenyl transferase 1, found in Methanosarcina barkeri (strain Fusaro / DSM 804).